We begin with the raw amino-acid sequence, 1578 residues long: Neurexin-3 (1578 aa).

The signal sequence occupies residues 1 to 27 (MSFTLHSVFFTLKVSSFLGSLVGLCLG). The Laminin G-like 1 domain maps to 28–202 (LEFMGLPNQW…SVQLEAEGPC (175 aa)). At 28–1503 (LEFMGLPNQW…EVIRESNSTT (1476 aa)) the chain is on the extracellular side. Asn-58 and Asn-105 each carry an N-linked (GlcNAc...) asparagine glycan. One can recognise an EGF-like 1 domain in the interval 198 to 235 (AEGPCGERPCENGGICFLLDGHPTCDCSTTGYGGTLCS). Disulfide bonds link Cys-202–Cys-213, Cys-207–Cys-222, and Cys-224–Cys-234. Laminin G-like domains are found at residues 260 to 444 (ENVA…VFKC) and 451 to 643 (DPIN…KSSC). Ca(2+) contacts are provided by Asp-308, Leu-325, and Met-378. Intrachain disulfides connect Cys-408/Cys-444, Cys-614/Cys-643, Cys-651/Cys-662, Cys-656/Cys-671, and Cys-673/Cys-683. The region spanning 647 to 684 (SAKQCDSYPCKNNAVCKDGWNRFICDCTGTGYWGRTCE) is the EGF-like 2 domain. Laminin G-like domains are found at residues 689-861 (ILSY…IDYC) and 875-1050 (DPVT…DRGC). Ca(2+)-binding residues include Asp-736 and Leu-753. Asn-761 carries an N-linked (GlcNAc...) asparagine glycan. Residue Arg-811 participates in Ca(2+) binding. 4 disulfides stabilise this stretch: Cys-1022–Cys-1050, Cys-1057–Cys-1068, Cys-1062–Cys-1077, and Cys-1079–Cys-1089. Residues 1053–1090 (PSTTCQEDSCANQGVCMQQWEGFTCDCSMTSYSGNQCN) form the EGF-like 3 domain. The Laminin G-like 6 domain occupies 1094–1294 (ATYIFGKSGG…NPNIKINGSV (201 aa)). Positions 1146 and 1163 each coordinate Ca(2+). N-linked (GlcNAc...) asparagine glycosylation occurs at Asn-1193. Ca(2+) contacts are provided by Ile-1245 and Asn-1247. 2 N-linked (GlcNAc...) asparagine glycosylation sites follow: Asn-1291 and Asn-1335. Residues 1328–1352 (ATTTTRKNRSTASIQPTSDDLVSSA) are disordered. Residues 1337–1352 (STASIQPTSDDLVSSA) are compositionally biased toward polar residues. Residue Ser-1351 is glycosylated (O-linked (Xyl...) (heparan sulfate) serine). An N-linked (GlcNAc...) asparagine glycan is attached at Asn-1500. A helical membrane pass occupies residues 1504–1524 (GMVVGIVAAAALCILILLYAM). The Cytoplasmic segment spans residues 1525-1578 (YKYRNRDEGSYQVDETRNYISNSAQSNGTLMKEKQASSKSGHKKQKNKDKEYYV). A disordered region spans residues 1546–1578 (NSAQSNGTLMKEKQASSKSGHKKQKNKDKEYYV).

This sequence belongs to the neurexin family. As to quaternary structure, the laminin G-like domain 2 binds to NXPH1. Isoform 8/alpha-4B binds to alpha-dystroglycan. The cytoplasmic C-terminal region binds to CASK. Specific isoforms bind neuroligins NLGN1, NLGN2 and NLGN3. Interacts with CLSTN3. Post-translationally, O-glycosylated; contains heparan sulfate. Heparan sulfate attachment is required for synapse development by mediating interactions with neuroligins. As to expression, brain.

The protein localises to the presynaptic cell membrane. Functionally, neuronal cell surface protein that may be involved in cell recognition and cell adhesion. May mediate intracellular signaling. This is Neurexin-3 (Nrxn3) from Rattus norvegicus (Rat).